An 874-amino-acid polypeptide reads, in one-letter code: Probable cation-transporting P-type ATPase (874 aa).

Residues 1–41 (MNSWTGLSEQAAIKSRQEHGANFLPEKKATPFWLLFLQQFK) lie on the Cytoplasmic side of the membrane. A helical transmembrane segment spans residues 42–62 (SLVVILLLLASLLSFVVAIVS). The Extracellular segment spans residues 63–79 (GLRSNWNFNHDLIIEWV). Residues 80–100 (QPFIILLTVFANSLIGSIQEF) traverse the membrane as a helical segment. Over 101 to 237 (KAQKSASALK…TKLSPLQQKL (137 aa)) the chain is Cytoplasmic. A helical transmembrane segment spans residues 238 to 257 (EKIGKWFSWFGLGLFAVVFL). At 258–275 (VQTALLGFDNFTNNWSIA) the chain is on the extracellular side. Residues 276 to 293 (LIGAIALVVAIIPEGLVT) traverse the membrane as a helical segment. The Cytoplasmic portion of the chain corresponds to 294 to 644 (FINVIFALSV…EEGRKTFLTC (351 aa)). The active-site 4-aspartylphosphate intermediate is Asp-331. Asp-589 and Asp-593 together coordinate Mg(2+). The helical transmembrane segment at 645–664 (KRVLLNLFLTSIAGTVVVLL) threads the bilayer. Residues 665–687 (GLFILGQVFKTNLLQQGHDFQVF) are Extracellular-facing. The helical transmembrane segment at 688 to 708 (SPTQLLIINLFVHGFPAVALA) threads the bilayer. The Cytoplasmic portion of the chain corresponds to 709 to 726 (VQPVKEKLMVGSFSTKNL). A helical membrane pass occupies residues 727-749 (FYNRQGFDLIWQSLFLSFLTLLF). At 750–770 (YSLGIIYAINNRDLQTSGDLI) the chain is on the extracellular side. Residues 771 to 790 (NRAGSTCGFFILGASAALNS) traverse the membrane as a helical segment. Topologically, residues 791–803 (LNLMVDKPLLMTN) are cytoplasmic. The helical transmembrane segment at 804–826 (PWFFKLVWIGSLASILVFLLIIF) threads the bilayer. At 827–844 (INPLGLVFNVLQDLTNHP) the chain is on the extracellular side. Residues 845–865 (VLISYSFGGVILYMGMNEVVK) traverse the membrane as a helical segment. Residues 866-874 (LIRLGYGNI) lie on the Cytoplasmic side of the membrane.

This sequence belongs to the cation transport ATPase (P-type) (TC 3.A.3) family. Type II subfamily.

It is found in the cell membrane. It catalyses the reaction ATP + H2O = ADP + phosphate + H(+). Could mediate calcium influx. The protein is Probable cation-transporting P-type ATPase (pacL) of Mycoplasma genitalium (strain ATCC 33530 / DSM 19775 / NCTC 10195 / G37) (Mycoplasmoides genitalium).